We begin with the raw amino-acid sequence, 491 residues long: Angiopoietin-related protein 1 (491 aa).

The first 23 residues, 1-23, serve as a signal peptide directing secretion; it reads MKTFTWTLGVLFFLLVDTGHCRG. Residues 80-168 adopt a coiled-coil conformation; it reads ITRMDLENLK…LNVTTEMLKM (89 aa). Residues Asn160 and Asn188 are each glycosylated (N-linked (GlcNAc...) asparagine). The Fibrinogen C-terminal domain occupies 271–491; it reads FINEGPFKDC…AVQMMIKPID (221 aa). Cystine bridges form between Cys280/Cys309 and Cys432/Cys445.

In terms of tissue distribution, highly expressed in adrenal gland, placenta, thyroid gland, heart, skeletal muscle and small intestine. Weakly expressed in testis, ovary, colon, pancreas, kidney and stomach.

Its subcellular location is the secreted. The protein is Angiopoietin-related protein 1 (ANGPTL1) of Homo sapiens (Human).